Consider the following 189-residue polypeptide: dCTP deaminase (189 aa).

DCTP-binding positions include 112 to 117, 136 to 138, glutamine 157, tyrosine 171, and glutamine 181; these read KSTYAR and TLE. Residue glutamate 138 is the Proton donor/acceptor of the active site.

Belongs to the dCTP deaminase family. In terms of assembly, homotrimer.

It carries out the reaction dCTP + H2O + H(+) = dUTP + NH4(+). It participates in pyrimidine metabolism; dUMP biosynthesis; dUMP from dCTP (dUTP route): step 1/2. Functionally, catalyzes the deamination of dCTP to dUTP. The sequence is that of dCTP deaminase from Albidiferax ferrireducens (strain ATCC BAA-621 / DSM 15236 / T118) (Rhodoferax ferrireducens).